A 124-amino-acid chain; its full sequence is UPF0375 protein Y45F10C.4 (124 aa).

The signal sequence occupies residues 1 to 23 (MNFLPSTVLLLSFVVAIISGSFS). Residues Asn36 and Asn62 are each glycosylated (N-linked (GlcNAc...) asparagine).

Belongs to the UPF0375 family.

It is found in the secreted. The sequence is that of UPF0375 protein Y45F10C.4 from Caenorhabditis elegans.